We begin with the raw amino-acid sequence, 163 residues long: Probable chemoreceptor glutamine deamidase CheD (163 aa).

The protein belongs to the CheD family.

It carries out the reaction L-glutaminyl-[protein] + H2O = L-glutamyl-[protein] + NH4(+). Its function is as follows. Probably deamidates glutamine residues to glutamate on methyl-accepting chemotaxis receptors (MCPs), playing an important role in chemotaxis. In Pyrococcus abyssi (strain GE5 / Orsay), this protein is Probable chemoreceptor glutamine deamidase CheD.